The chain runs to 217 residues: Ribosome maturation factor RimP (217 aa).

It belongs to the RimP family.

Its subcellular location is the cytoplasm. Its function is as follows. Required for maturation of 30S ribosomal subunits. The sequence is that of Ribosome maturation factor RimP from Nocardia farcinica (strain IFM 10152).